We begin with the raw amino-acid sequence, 497 residues long: uncharacterized protein (497 aa).

A disordered region spans residues 58–79; it reads ISTRSFRNDGNDSDPQTLDPDA. 12 consecutive transmembrane segments (helical) span residues 86 to 106, 120 to 140, 155 to 175, 180 to 200, 222 to 242, 258 to 278, 309 to 329, 348 to 368, 378 to 398, 407 to 427, 438 to 458, and 468 to 488; these read IAFV…ALPI, FSGL…YPML, FRPL…YSLA, WLYL…MFLY, LNIL…GLLA, VGSW…SIFF, FMLV…AGYQ, GNFL…STFL, MLYG…LDVL, FVLY…LISL, ILVG…GAIC, and VGFI…LLFL.

The protein belongs to the major facilitator superfamily.

It localises to the membrane. This is an uncharacterized protein from Schizosaccharomyces pombe (strain 972 / ATCC 24843) (Fission yeast).